A 157-amino-acid chain; its full sequence is Isotocin-neurophysin IT 1 (157 aa).

The signal sequence occupies residues 1–20 (MFGTSVSALCLLFLLSVCTA). Cys21 and Cys26 are disulfide-bonded. Gly29 is subject to Glycine amide. 7 disulfide bridges follow: Cys42/Cys86, Cys45/Cys59, Cys53/Cys76, Cys60/Cys66, Cys93/Cys106, Cys100/Cys118, and Cys107/Cys112.

Belongs to the vasopressin/oxytocin family. In terms of processing, seven disulfide bonds are present in neurophysin.

The protein localises to the secreted. Its function is as follows. Isotocin causes contraction of smooth muscles. The protein is Isotocin-neurophysin IT 1 of Oncorhynchus masou (Cherry salmon).